The following is a 69-amino-acid chain: Putative membrane protein insertion efficiency factor (69 aa).

This sequence belongs to the UPF0161 family.

The protein localises to the cell membrane. Functionally, could be involved in insertion of integral membrane proteins into the membrane. The chain is Putative membrane protein insertion efficiency factor from Desulfitobacterium hafniense (strain Y51).